Reading from the N-terminus, the 2281-residue chain is Retinal-specific phospholipid-transporting ATPase ABCA4 (2281 aa).

At 1–24 the chain is on the cytoplasmic side; it reads MGFARQIKLLLWKNWTLRKRQKIR. The helical transmembrane segment at 25 to 45 threads the bilayer; it reads FVVELVWPLSLFLVLIWLRNV. Residues 46 to 646 lie on the Extracellular side of the membrane; it reads NPLYSKHECH…MPYPCFVDDS (601 aa). Disulfide bonds link Cys54–Cys81 and Cys75–Cys324. Residue Asn98 is glycosylated (N-linked (GlcNAc...) asparagine). Mg(2+)-binding residues include Ser336 and Asn338. Residues Cys370 and Cys519 are joined by a disulfide bond. N-linked (Hex...) asparagine glycosylation is found at Asn415 and Asn504. Residues Arg587 and Arg653 each contribute to the an N-all-trans-retinylidenephosphatidylethanolamine site. 3 disulfide bridges follow: Cys641–Cys1488, Cys1442–Cys1453, and Cys1486–Cys1500. The helical transmembrane segment at 647 to 667 threads the bilayer; sequence FMIILNRCFPIFMVLAWIYSV. The Cytoplasmic portion of the chain corresponds to 668–699; it reads SMTVKSIVLEKELRLKETLKNQGVSNRVIWCT. The chain crosses the membrane as a helical span at residues 700–720; sequence WFLDSFSIMSMSICLLTIFIM. Residues 721-730 are Extracellular-facing; the sequence is HGRILHYSNP. Residues 731–751 traverse the membrane as a helical segment; it reads FILFLFLLAFSIATIMQCFLL. At 752 to 759 the chain is on the cytoplasmic side; that stretch reads STFFSRAS. A helical membrane pass occupies residues 760-780; sequence LAAACSGVIYFTLYLPHILCF. The Extracellular portion of the chain corresponds to 781–835; it reads AWQDRITADMKMAVSLLSPVAFGFGTEYLARFEEQGVGLQWSNIGNSPMEGDEFS. The helical transmembrane segment at 836–856 threads the bilayer; it reads FLMSMKMMLLDAALYGLLAWY. At 857-1374 the chain is on the cytoplasmic side; the sequence is LDQVFPGDYG…IRSHKDFLAQ (518 aa). Thr901 is modified (phosphothreonine). The 232-residue stretch at 929–1160 folds into the ABC transporter 1 domain; the sequence is VCVKNLVKIF…FGTGFYLTLV (232 aa). ATP-binding residues include Phe938, Gly966, and Lys969. Thr970 contributes to the Mg(2+) binding site. ATP is bound by residues Thr971, Gln1010, Lys1054, Gly1064, Gly1065, and His1118. The residue at position 1185 (Ser1185) is a Phosphoserine. Residues 1295-1340 are disordered; sequence ENINLRHPCSGPSEKAGQTPQGSSSHPREPAAHPEGQPPPEREGHS. A compositionally biased stretch (polar residues) spans 1310–1319; that stretch reads AGQTPQGSSS. The residue at position 1313 (Thr1313) is a Phosphothreonine. Phosphoserine occurs at positions 1317 and 1319. A helical transmembrane segment spans residues 1375–1395; the sequence is IVLPATFVFLALMLSLIIPPF. Over 1396 to 1679 the chain is Extracellular; that stretch reads GEYPALTLHP…TVLTTSVDAV (284 aa). Residue Asn1455 is glycosylated (N-linked (Hex...) asparagine). Asn1527 carries an N-linked (Hex...) asparagine glycan. Asn1586 carries N-linked (GlcNAc...) asparagine glycosylation. A glycan (N-linked (Hex...) asparagine) is linked at Asn1660. The helical transmembrane segment at 1680-1700 threads the bilayer; sequence VAICVIFAMSFVPASFVLYLI. The Cytoplasmic segment spans residues 1701–1725; sequence QERVNKAKHLQFVSGVSPTTYWLTN. A helical transmembrane segment spans residues 1726–1746; it reads FLWDIMNYTVSAALVVGIFIG. Over 1747-1757 the chain is Extracellular; that stretch reads FQKKAYTSSEN. A helical membrane pass occupies residues 1758–1778; sequence LPALVALLMLYGWAVIPMMYP. At 1779 to 1790 the chain is on the cytoplasmic side; it reads ASFLFDIPSTAY. Residues 1791–1811 traverse the membrane as a helical segment; sequence VALSCANLFIGINSSAITFVL. Residues 1812 to 1829 lie on the Extracellular side of the membrane; sequence ELFENNRTLLRINAMLRK. The N-linked (GlcNAc...) asparagine glycan is linked to Asn1817. The chain crosses the membrane as a helical span at residues 1830-1850; that stretch reads LLIIFPHFCLGRGLIDLALSQ. Over 1851–1879 the chain is Cytoplasmic; sequence AVTDVYARFGEEHSSNPFQWDLIGKNLAA. A helical membrane pass occupies residues 1880 to 1900; the sequence is MAVEGVVYFLLTLLIQYQFFF. At 1901–2281 the chain is on the extracellular side; sequence SRWTTEPAKE…VDKGNSAPQG (381 aa). The N-linked (GlcNAc...) asparagine glycan is linked to Asn1931. In terms of domain architecture, ABC transporter 2 spans 1936-2168; sequence LRLNELTKVY…FGDGYIVTMK (233 aa). Residues Asn1972, Gly1973, Lys1976, Thr1977, and Thr1978 each coordinate ATP. Mg(2+) is bound at residue Thr1977. N-linked (GlcNAc...) asparagine glycosylation is found at Asn2004 and Asn2050. Gly2071 is a binding site for ATP. The segment at 2242 to 2247 is essential for ATP binding and ATPase activity; sequence VFVNFA. Residue Asn2251 is glycosylated (N-linked (GlcNAc...) asparagine). The tract at residues 2262 to 2281 is disordered; sequence AAGASRQAKEVDKGNSAPQG.

Post-translationally, N-glycosylated. In terms of processing, proteolytic cleavage by trypsin leads to a 120-kDa N-terminal fragment and a 115-kDa C-terminal fragment that are linked through disulfide bonds. Phosphorylation is independent of light exposure and modulates ATPase activity. Expressed in retina namely in the periphery and incisures of the rod outer segments (ROS).

The protein localises to the membrane. It localises to the cell projection. Its subcellular location is the cilium. It is found in the photoreceptor outer segment. The protein resides in the cytoplasmic vesicle. The protein localises to the endoplasmic reticulum. It carries out the reaction ATP + H2O + phospholipidSide 1 = ADP + phosphate + phospholipidSide 2.. It catalyses the reaction an N-all-trans-retinylidenephosphatidylethanolamine(out) + ATP + H2O = an N-all-trans-retinylidenephosphatidylethanolamine(in) + ADP + phosphate + H(+). The enzyme catalyses a 1,2-diacyl-sn-glycero-3-phosphoethanolamine(out) + ATP + H2O = a 1,2-diacyl-sn-glycero-3-phosphoethanolamine(in) + ADP + phosphate + H(+). The catalysed reaction is N-11-cis-retinylidenephosphatidylethanolamine(out) + ATP + H2O = N-11-cis-retinylidenephosphatidylethanolamine(in) + ADP + phosphate + H(+). It carries out the reaction ATP + H2O = ADP + phosphate + H(+). All-trans-retinal transport activity is reduced by EDTA chelation of Mg2+. All-trans-retinal transport activity is inhibited by N-ethylmaleimide (NEM). Phosphatidylethanolamine transport is strongly inhibited by beryllium fluoride and NEM. In terms of biological role, flippase that catalyzes in an ATP-dependent manner the transport of retinal-phosphatidylethanolamine conjugates like the 11-cis and all-trans isomers of N-retinylidene-phosphatidylethanolamine from the lumen to the cytoplasmic leaflet of photoreceptor outer segment disk membranes, where N-cis-retinylidene-phosphatidylethanolamine (N-cis-R-PE) is then isomerized to its all-trans isomer (N-trans-R-PE) and reduced by RDH8 to produce all-trans-retinol (all-trans-rol) and therefore prevents the accumulation of excess of 11-cis-retinal and its schiff-base conjugate and the formation of toxic bisretinoid. Displays both ATPase and GTPase activity that is strongly influenced by the lipid environment and the presence of retinoid compounds. Binds the unprotonated form of N-retinylidene-phosphatidylethanolamine with high affinity in the absence of ATP and ATP binding and hydrolysis induce a protein conformational change that causes the dissociation of N-retinylidene-phosphatidylethanolamine. This Bos taurus (Bovine) protein is Retinal-specific phospholipid-transporting ATPase ABCA4.